We begin with the raw amino-acid sequence, 120 residues long: Ribonuclease P protein component 2 (120 aa).

It belongs to the eukaryotic/archaeal RNase P protein component 2 family. As to quaternary structure, consists of a catalytic RNA component and at least 4-5 protein subunits.

It localises to the cytoplasm. It carries out the reaction Endonucleolytic cleavage of RNA, removing 5'-extranucleotides from tRNA precursor.. In terms of biological role, part of ribonuclease P, a protein complex that generates mature tRNA molecules by cleaving their 5'-ends. This chain is Ribonuclease P protein component 2, found in Thermococcus gammatolerans (strain DSM 15229 / JCM 11827 / EJ3).